A 28-amino-acid polypeptide reads, in one-letter code: 3,4-dihydroxybenzoate decarboxylase (28 aa).

In terms of assembly, homopentamer.

It carries out the reaction 3,4-dihydroxybenzoate + H(+) = catechol + CO2. Its activity is regulated as follows. Inhibited by oxygen. Completely inhibited by HgCl(2). Partially inhibited by ZnSO(4), 2,3,4-trihydroxybeonzoate and 3,4,5-trihydroxybeonzoate. Unaffected by KCl, MnCl(2) or EDTA. Not stimulated by thiamine phosphate, pyridoxal 5'-phosphate or biotin. Not inhibited by hydroxylamine, NaBH(4) or avidin. Functionally, reversibly catalyzes the decarboxylation of 3,4-dihydroxybenzoate to catechol. Inactive toward 4-hydroxybenzoate and other benzoate derivatives. The sequence is that of 3,4-dihydroxybenzoate decarboxylase from Sedimentibacter hydroxybenzoicus (Clostridium hydroxybenzoicum).